We begin with the raw amino-acid sequence, 677 residues long: Methionine--tRNA ligase (677 aa).

The 'HIGH' region signature appears at Pro15–His25. Residues Cys146, Cys149, Cys159, and Cys162 each coordinate Zn(2+). A 'KMSKS' region motif is present at residues Lys333 to Ser337. Lys336 contributes to the ATP binding site. Positions Asp575 to Lys677 constitute a tRNA-binding domain.

The protein belongs to the class-I aminoacyl-tRNA synthetase family. MetG type 1 subfamily. In terms of assembly, homodimer. Zn(2+) is required as a cofactor.

Its subcellular location is the cytoplasm. It carries out the reaction tRNA(Met) + L-methionine + ATP = L-methionyl-tRNA(Met) + AMP + diphosphate. Functionally, is required not only for elongation of protein synthesis but also for the initiation of all mRNA translation through initiator tRNA(fMet) aminoacylation. This chain is Methionine--tRNA ligase, found in Cronobacter sakazakii (strain ATCC BAA-894) (Enterobacter sakazakii).